The chain runs to 101 residues: Small ribosomal subunit protein uS14 (101 aa).

It belongs to the universal ribosomal protein uS14 family. In terms of assembly, part of the 30S ribosomal subunit. Contacts proteins S3 and S10.

Binds 16S rRNA, required for the assembly of 30S particles and may also be responsible for determining the conformation of the 16S rRNA at the A site. In Citrobacter koseri (strain ATCC BAA-895 / CDC 4225-83 / SGSC4696), this protein is Small ribosomal subunit protein uS14.